Reading from the N-terminus, the 215-residue chain is MOB kinase activator-like 1A (215 aa).

The tract at residues 1-27 (MSLFGLGRNQKTFRPKKSAPSGSKGAQ) is disordered. Zn(2+) is bound by residues C79, C84, H161, and H166.

The protein belongs to the MOB1/phocein family. In terms of assembly, interacts with SIK1 at the plasma membrane and in the nucleus. In terms of tissue distribution, constitutively expressed. In 3- to 4-day-old seedlings, expression is high in the shoot apical meristem and along the vasculature in cotyledons, hypocotyls and roots. At the root tip, expression is detected in columella and lateral root cap cells as well as in the stem cell niche around the quiescent center (QC). The levels of expression decrease progressively in the meristematic zone from the root tip towards the base of the root, becoming stronger again in the elongation zone. In flowers, expression appears localized in ovules and pollen.

Its subcellular location is the nucleus. It is found in the cell membrane. The protein resides in the vacuole membrane. Plays a key role in regulation of cell expansion and cell division. Required for proper plant development, the correct patterning of the root meristem and the control of root growth. Involved in both sporogenesis and gametogenesis. This is MOB kinase activator-like 1A from Arabidopsis thaliana (Mouse-ear cress).